We begin with the raw amino-acid sequence, 354 residues long: Polyribonucleotide 5'-hydroxyl-kinase PYRAB01840 (354 aa).

36 to 43 provides a ligand contact to ATP; that stretch reads GDVDTGKT.

Requires a divalent metal cation as cofactor.

It carries out the reaction a 5'-end dephospho-2'-deoxyribonucleoside-DNA + ATP = a 5'-end 5'-phospho-2'-deoxyribonucleoside-DNA + ADP + H(+). The catalysed reaction is a 5'-end dephospho-ribonucleoside-RNA + ATP = a 5'-end 5'-phospho-ribonucleoside-RNA + ADP + H(+). Polynucleotide kinase that can phosphorylate the 5'-hydroxyl groups of both single-stranded RNA (ssRNA) and single-stranded DNA (ssDNA). Exhibits a strong preference for ssRNA. The chain is Polyribonucleotide 5'-hydroxyl-kinase PYRAB01840 from Pyrococcus abyssi (strain GE5 / Orsay).